The sequence spans 231 residues: Enolase-phosphatase E1 (231 aa).

Belongs to the HAD-like hydrolase superfamily. MasA/MtnC family. As to quaternary structure, monomer. It depends on Mg(2+) as a cofactor.

The catalysed reaction is 5-methylsulfanyl-2,3-dioxopentyl phosphate + H2O = 1,2-dihydroxy-5-(methylsulfanyl)pent-1-en-3-one + phosphate. The protein operates within amino-acid biosynthesis; L-methionine biosynthesis via salvage pathway; L-methionine from S-methyl-5-thio-alpha-D-ribose 1-phosphate: step 3/6. It functions in the pathway amino-acid biosynthesis; L-methionine biosynthesis via salvage pathway; L-methionine from S-methyl-5-thio-alpha-D-ribose 1-phosphate: step 4/6. Functionally, bifunctional enzyme that catalyzes the enolization of 2,3-diketo-5-methylthiopentyl-1-phosphate (DK-MTP-1-P) into the intermediate 2-hydroxy-3-keto-5-methylthiopentenyl-1-phosphate (HK-MTPenyl-1-P), which is then dephosphorylated to form the acireductone 1,2-dihydroxy-3-keto-5-methylthiopentene (DHK-MTPene). This chain is Enolase-phosphatase E1, found in Granulibacter bethesdensis (strain ATCC BAA-1260 / CGDNIH1).